A 250-amino-acid polypeptide reads, in one-letter code: MADS-box protein J2 (250 aa).

Residues 1–61 (MGRGRVELKR…GKLYEFSSAS (61 aa)) form the MADS-box domain. Residues 87–177 (TQMNYNEYVR…KNKLEESAAR (91 aa)) enclose the K-box domain.

The protein localises to the nucleus. Its function is as follows. MADS-box transcription factor that acts redundantly with EJ2 to control meristem maturation and inflorescence architecture. This chain is MADS-box protein J2, found in Solanum lycopersicum (Tomato).